An 866-amino-acid polypeptide reads, in one-letter code: Probable LRR receptor-like serine/threonine-protein kinase At5g16900 (866 aa).

The N-terminal stretch at 1 to 20 is a signal peptide; the sequence is MEDRHRYLFFIFAIIHYVQA. Residues 21 to 515 are Extracellular-facing; that stretch reads QQGFISLDCG…SSSGNKETTV (495 aa). Asparagine 137, asparagine 176, asparagine 230, asparagine 251, asparagine 331, asparagine 404, asparagine 409, and asparagine 436 each carry an N-linked (GlcNAc...) asparagine glycan. LRR repeat units follow at residues 415 to 438, 439 to 461, and 463 to 485; these read RIISLDLSSHKLTGKIVPDIQNLT, QLQKLDLSNNKLTGGVPEFLANM, and SLLFINLSNNNLVGSIPQALLDR. 2 N-linked (GlcNAc...) asparagine glycosylation sites follow: asparagine 468 and asparagine 505. A helical membrane pass occupies residues 516–536; that stretch reads IAPVAAAIAIFIAVLVLIIVF. At 537–866 the chain is on the cytoplasmic side; sequence IKKRPSSIRA…LNQVIDSKSS (330 aa). At threonine 564 the chain carries Phosphothreonine. The Protein kinase domain maps to 573 to 846; the sequence is NNFERVIGEG…HVVQELKQCI (274 aa). ATP contacts are provided by residues 579-587 and lysine 601; that span reads IGEGGFGVV. Phosphotyrosine is present on tyrosine 646. Aspartate 698 serves as the catalytic Proton acceptor. Phosphoserine is present on serine 732. Threonine 733 and threonine 738 each carry phosphothreonine. Phosphotyrosine is present on tyrosine 746.

The protein belongs to the protein kinase superfamily. Ser/Thr protein kinase family.

The protein resides in the membrane. The enzyme catalyses L-seryl-[protein] + ATP = O-phospho-L-seryl-[protein] + ADP + H(+). The catalysed reaction is L-threonyl-[protein] + ATP = O-phospho-L-threonyl-[protein] + ADP + H(+). The chain is Probable LRR receptor-like serine/threonine-protein kinase At5g16900 from Arabidopsis thaliana (Mouse-ear cress).